The chain runs to 372 residues: L-selectin (372 aa).

The N-terminal stretch at 1-28 (MIFPRKCQSTQRDLWNIFKLWGWTMLCC) is a signal peptide. A propeptide spanning residues 29-38 (DFLAHHGTDC) is cleaved from the precursor. Residues 39–332 (WTYHYSENPM…FSMIKEGDYN (294 aa)) are Extracellular-facing. In terms of domain architecture, C-type lectin spans 55 to 155 (RFCRENYTDL…ACHKPKAALC (101 aa)). Cystine bridges form between cysteine 57-cysteine 155, cysteine 128-cysteine 147, cysteine 128-cysteine 160, cysteine 160-cysteine 171, cysteine 165-cysteine 180, cysteine 182-cysteine 191, cysteine 197-cysteine 241, cysteine 227-cysteine 254, cysteine 259-cysteine 303, and cysteine 289-cysteine 316. N-linked (GlcNAc...) asparagine glycans are attached at residues asparagine 60 and asparagine 104. 5 residues coordinate Ca(2+): glutamate 118, asparagine 120, glutamate 126, asparagine 143, and aspartate 144. An EGF-like domain is found at 156–192 (YTASCQPWSCSGHGECVEIINNYTCNCDVGYYGPQCQ). An N-linked (GlcNAc...) asparagine glycan is attached at asparagine 177. Sushi domains follow at residues 195–256 (IQCE…TCQV) and 257–318 (IQCE…ICQK). N-linked (GlcNAc...) asparagine glycans are attached at residues asparagine 226, asparagine 232, asparagine 246, and asparagine 271. A helical transmembrane segment spans residues 333 to 355 (PLFIPVAVIVTAFSGLAFIIWLA). Residues 356–372 (RRLKKGKKSKKSMDDPY) lie on the Cytoplasmic side of the membrane.

The protein belongs to the selectin/LECAM family. In terms of assembly, interaction with SELPLG/PSGL1 and PODXL2 is required for promoting recruitment and rolling of leukocytes. This interaction is dependent on the sialyl Lewis X glycan modification of SELPLG and PODXL2, and tyrosine sulfation modifications of SELPLG. Sulfation on 'Tyr-51' of SELPLG is important for L-selectin binding. In terms of processing, N-glycosylated.

The protein localises to the cell membrane. Calcium-dependent lectin that mediates cell adhesion by binding to glycoproteins on neighboring cells. Mediates the adherence of lymphocytes to endothelial cells of high endothelial venules in peripheral lymph nodes. Promotes initial tethering and rolling of leukocytes in endothelia. In Papio hamadryas (Hamadryas baboon), this protein is L-selectin (SELL).